Consider the following 292-residue polypeptide: Phosphatidylserine decarboxylase proenzyme (292 aa).

Residues D89, H146, and S252 each act as charge relay system; for autoendoproteolytic cleavage activity in the active site. S252 acts as the Schiff-base intermediate with substrate; via pyruvic acid; for decarboxylase activity in catalysis. Residue S252 is modified to Pyruvic acid (Ser); by autocatalysis.

Belongs to the phosphatidylserine decarboxylase family. PSD-B subfamily. Prokaryotic type I sub-subfamily. In terms of assembly, heterodimer of a large membrane-associated beta subunit and a small pyruvoyl-containing alpha subunit. Pyruvate is required as a cofactor. In terms of processing, is synthesized initially as an inactive proenzyme. Formation of the active enzyme involves a self-maturation process in which the active site pyruvoyl group is generated from an internal serine residue via an autocatalytic post-translational modification. Two non-identical subunits are generated from the proenzyme in this reaction, and the pyruvate is formed at the N-terminus of the alpha chain, which is derived from the carboxyl end of the proenzyme. The autoendoproteolytic cleavage occurs by a canonical serine protease mechanism, in which the side chain hydroxyl group of the serine supplies its oxygen atom to form the C-terminus of the beta chain, while the remainder of the serine residue undergoes an oxidative deamination to produce ammonia and the pyruvoyl prosthetic group on the alpha chain. During this reaction, the Ser that is part of the protease active site of the proenzyme becomes the pyruvoyl prosthetic group, which constitutes an essential element of the active site of the mature decarboxylase.

The protein localises to the cell membrane. It carries out the reaction a 1,2-diacyl-sn-glycero-3-phospho-L-serine + H(+) = a 1,2-diacyl-sn-glycero-3-phosphoethanolamine + CO2. The protein operates within phospholipid metabolism; phosphatidylethanolamine biosynthesis; phosphatidylethanolamine from CDP-diacylglycerol: step 2/2. Catalyzes the formation of phosphatidylethanolamine (PtdEtn) from phosphatidylserine (PtdSer). This chain is Phosphatidylserine decarboxylase proenzyme, found in Shewanella sp. (strain MR-7).